A 58-amino-acid chain; its full sequence is Bowman-Birk type wound-induced trypsin inhibitor (58 aa).

7 cysteine pairs are disulfide-bonded: Cys-4–Cys-57, Cys-5–Cys-20, Cys-8–Cys-53, Cys-10–Cys-18, Cys-27–Cys-34, Cys-31–Cys-46, and Cys-36–Cys-44.

This sequence belongs to the Bowman-Birk serine protease inhibitor family.

The protein is Bowman-Birk type wound-induced trypsin inhibitor of Medicago sativa (Alfalfa).